The sequence spans 169 residues: MYNVGKIVNTHGLIGEIRVIATTDFPEERFQVGNTVYLFEKNSKKPEKLIIRSHRKHKNFDLLMFEGFTGIHQVERMKEGVLKIKEAQLTDLEENEFYFHEIIGCIVVTTDGEELGEITEILTPGANDVWVVKGSDKKEKLIPYIADVVKEININDKKITIEVMEGLLD.

The PRC barrel domain occupies 94-167; sequence ENEFYFHEII…KITIEVMEGL (74 aa).

This sequence belongs to the RimM family. As to quaternary structure, binds ribosomal protein uS19.

The protein localises to the cytoplasm. Functionally, an accessory protein needed during the final step in the assembly of 30S ribosomal subunit, possibly for assembly of the head region. Essential for efficient processing of 16S rRNA. May be needed both before and after RbfA during the maturation of 16S rRNA. It has affinity for free ribosomal 30S subunits but not for 70S ribosomes. The chain is Ribosome maturation factor RimM from Listeria monocytogenes serotype 4b (strain F2365).